The sequence spans 131 residues: Small ribosomal subunit protein uS8 (131 aa).

It belongs to the universal ribosomal protein uS8 family. As to quaternary structure, part of the 30S ribosomal subunit. Contacts proteins S5 and S12.

In terms of biological role, one of the primary rRNA binding proteins, it binds directly to 16S rRNA central domain where it helps coordinate assembly of the platform of the 30S subunit. This is Small ribosomal subunit protein uS8 from Erythrobacter litoralis (strain HTCC2594).